The sequence spans 57 residues: Andropin (57 aa).

An N-terminal signal peptide occupies residues 1-23 (MKYFVVLVVLALILAISVGPSDA).

This sequence belongs to the andropin family. As to expression, ejaculatory duct of adult males.

Its subcellular location is the secreted. Its function is as follows. Male-specific peptide with moderate activity against Gram-positive bacteria. This is Andropin (Anp) from Drosophila melanogaster (Fruit fly).